We begin with the raw amino-acid sequence, 524 residues long: Cytochrome P450 4F3 (524 aa).

The chain crosses the membrane as a helical span at residues 15–35 (AASPWLLLLLVGASCLLAYIL). C468 serves as a coordination point for heme.

It belongs to the cytochrome P450 family. Heme is required as a cofactor.

The protein resides in the endoplasmic reticulum membrane. It localises to the microsome membrane. It carries out the reaction leukotriene B4 + reduced [NADPH--hemoprotein reductase] + O2 = 18-hydroxy-leukotriene B4 + oxidized [NADPH--hemoprotein reductase] + H2O + H(+). The catalysed reaction is leukotriene B4 + reduced [NADPH--hemoprotein reductase] + O2 = 19-hydroxy-leukotriene B4 + oxidized [NADPH--hemoprotein reductase] + H2O + H(+). Its pathway is lipid metabolism; leukotriene B4 degradation. Its function is as follows. A cytochrome P450 monooxygenase involved in the metabolism of the pro-inflammatory lipid mediator leukotriene B4 (LTB4). Hydroxylates at the omega-1 and omega-2 positions LTB4. This oxidation step leads to LTB4 inactivation, which is postulated to be a crucial part of the resolution of inflammation. Mechanistically, uses molecular oxygen inserting one oxygen atom into a substrate, and reducing the second into a water molecule, with two electrons provided by NADPH via cytochrome P450 reductase (CPR; NADPH-ferrihemoprotein reductase). This chain is Cytochrome P450 4F3, found in Rattus norvegicus (Rat).